Reading from the N-terminus, the 302-residue chain is Chloramphenicol resistance protein (302 aa).

Its subcellular location is the cell membrane. In terms of biological role, this protein is thought to be a membrane-associated barrier of drug uptake. The chain is Chloramphenicol resistance protein (cml) from Escherichia coli.